Reading from the N-terminus, the 213-residue chain is Pyridoxine/pyridoxamine 5'-phosphate oxidase (213 aa).

Substrate-binding positions include 9-12 (RKSY) and lysine 67. FMN is bound by residues 62 to 67 (RVVLIK), 77 to 78 (YT), arginine 83, and lysine 84. Substrate-binding residues include tyrosine 124, arginine 128, and serine 132. FMN contacts are provided by residues 141 to 142 (QS) and tryptophan 185. 191–193 (RLH) serves as a coordination point for substrate. FMN is bound at residue arginine 195.

The protein belongs to the pyridoxamine 5'-phosphate oxidase family. As to quaternary structure, homodimer. Requires FMN as cofactor.

The catalysed reaction is pyridoxamine 5'-phosphate + O2 + H2O = pyridoxal 5'-phosphate + H2O2 + NH4(+). The enzyme catalyses pyridoxine 5'-phosphate + O2 = pyridoxal 5'-phosphate + H2O2. It participates in cofactor metabolism; pyridoxal 5'-phosphate salvage; pyridoxal 5'-phosphate from pyridoxamine 5'-phosphate: step 1/1. It functions in the pathway cofactor metabolism; pyridoxal 5'-phosphate salvage; pyridoxal 5'-phosphate from pyridoxine 5'-phosphate: step 1/1. Its function is as follows. Catalyzes the oxidation of either pyridoxine 5'-phosphate (PNP) or pyridoxamine 5'-phosphate (PMP) into pyridoxal 5'-phosphate (PLP). This Methylibium petroleiphilum (strain ATCC BAA-1232 / LMG 22953 / PM1) protein is Pyridoxine/pyridoxamine 5'-phosphate oxidase.